A 228-amino-acid polypeptide reads, in one-letter code: Cytidylate kinase (228 aa).

Position 17-25 (17-25) interacts with ATP; the sequence is GPTASGKGT.

The protein belongs to the cytidylate kinase family. Type 1 subfamily.

It is found in the cytoplasm. The enzyme catalyses CMP + ATP = CDP + ADP. It carries out the reaction dCMP + ATP = dCDP + ADP. The chain is Cytidylate kinase from Burkholderia thailandensis (strain ATCC 700388 / DSM 13276 / CCUG 48851 / CIP 106301 / E264).